The chain runs to 265 residues: Glutamate 5-kinase (265 aa).

Lysine 15 contacts ATP. 3 residues coordinate substrate: serine 55, aspartate 142, and asparagine 158. Residues 178–179 and 220–226 contribute to the ATP site; these read SD and TGGMVTK.

The protein belongs to the glutamate 5-kinase family.

It is found in the cytoplasm. It catalyses the reaction L-glutamate + ATP = L-glutamyl 5-phosphate + ADP. The protein operates within amino-acid biosynthesis; L-proline biosynthesis; L-glutamate 5-semialdehyde from L-glutamate: step 1/2. Catalyzes the transfer of a phosphate group to glutamate to form L-glutamate 5-phosphate. The protein is Glutamate 5-kinase of Lactiplantibacillus plantarum (strain ATCC BAA-793 / NCIMB 8826 / WCFS1) (Lactobacillus plantarum).